We begin with the raw amino-acid sequence, 115 residues long: Large ribosomal subunit protein bL20 (115 aa).

Belongs to the bacterial ribosomal protein bL20 family.

Binds directly to 23S ribosomal RNA and is necessary for the in vitro assembly process of the 50S ribosomal subunit. It is not involved in the protein synthesizing functions of that subunit. The sequence is that of Large ribosomal subunit protein bL20 from Borrelia turicatae (strain 91E135).